A 207-amino-acid polypeptide reads, in one-letter code: LexA repressor (207 aa).

Positions 28 to 48 (VREIGEAVGLASSFTVHGHLS) form a DNA-binding region, H-T-H motif. Residues S130 and K168 each act as for autocatalytic cleavage activity in the active site.

This sequence belongs to the peptidase S24 family. In terms of assembly, homodimer.

The catalysed reaction is Hydrolysis of Ala-|-Gly bond in repressor LexA.. Represses a number of genes involved in the response to DNA damage (SOS response), including recA and lexA. In the presence of single-stranded DNA, RecA interacts with LexA causing an autocatalytic cleavage which disrupts the DNA-binding part of LexA, leading to derepression of the SOS regulon and eventually DNA repair. This Staphylococcus aureus (strain Newman) protein is LexA repressor.